A 60-amino-acid polypeptide reads, in one-letter code: Small ribosomal subunit protein bS21 (60 aa).

The interval 39-60 is disordered; sequence ETPQEKRKRKAVARRRQRTRRR. The span at 44-60 shows a compositional bias: basic residues; the sequence is KRKRKAVARRRQRTRRR.

The protein belongs to the bacterial ribosomal protein bS21 family.

The chain is Small ribosomal subunit protein bS21 from Microcystis aeruginosa (strain NIES-843 / IAM M-2473).